We begin with the raw amino-acid sequence, 619 residues long: ETS-related transcription factor Elf-1 (619 aa).

Residues serine 110, serine 163, serine 167, and serine 168 each carry the phosphoserine modification. A disordered region spans residues 158 to 199 (EKYADSPGASSPEQPKRKKGRKTKPPRPDSPATTPNISVKKK). Positions 173–182 (KRKKGRKTKP) are enriched in basic residues. The residue at position 187 (serine 187) is a Phosphoserine. Threonine 190 carries the phosphothreonine modification. Residues 208–290 (IYLWEFLLAL…EGQRLVYQFK (83 aa)) constitute a DNA-binding region (ETS). A disordered region spans residues 300–366 (NDEDPSSSIE…DPVEVAQPSE (67 aa)). A compositionally biased stretch (low complexity) spans 305–321 (SSSIESSDPSLSSSATS). The span at 322–335 (NRNQTSRSRVSSSP) shows a compositional bias: polar residues. Serine 432 carries the post-translational modification Phosphoserine. A disordered region spans residues 564-592 (TLTQEVEKKESEDHLKENTEKTEQQPQPY). Positions 568 to 586 (EVEKKESEDHLKENTEKTE) are enriched in basic and acidic residues.

It belongs to the ETS family. As to quaternary structure, binds to the underphosphorylated form of RB. May interact with other transcription factors in order to regulate specific genes. Interacts with RUNX1. In fetal tissues, it is highly expressed in heart, lung liver and kidney, and weakly expressed in brain. In adult, it is highly expressed in pancreas, spleen, thymus and peripheral blood leukocytes, expressed at moderate levels in heart, placenta, lung, liver, skeletal muscle, kidney, prostate, ovary, small intestine and colon, and weakly expressed in brain and testis.

The protein resides in the nucleus. Its function is as follows. Transcription factor that activates the LYN and BLK promoters. Appears to be required for the T-cell-receptor-mediated trans activation of HIV-2 gene expression. Binds specifically to two purine-rich motifs in the HIV-2 enhancer. The sequence is that of ETS-related transcription factor Elf-1 (ELF1) from Homo sapiens (Human).